Reading from the N-terminus, the 256-residue chain is Phosphonates import ATP-binding protein PhnC (256 aa).

The ABC transporter domain occupies 7–251; sequence IEMKNVTKVY…VFDNIYNGGK (245 aa). Residue 40-47 coordinates ATP; that stretch reads GLSGAGKS.

Belongs to the ABC transporter superfamily. Phosphonates importer (TC 3.A.1.9.1) family. In terms of assembly, the complex is composed of two ATP-binding proteins (PhnC), two transmembrane proteins (PhnE) and a solute-binding protein (PhnD).

The protein resides in the cell membrane. The enzyme catalyses phosphonate(out) + ATP + H2O = phosphonate(in) + ADP + phosphate + H(+). Functionally, part of the ABC transporter complex PhnCDE involved in phosphonates import. Responsible for energy coupling to the transport system. This Lactobacillus delbrueckii subsp. bulgaricus (strain ATCC 11842 / DSM 20081 / BCRC 10696 / JCM 1002 / NBRC 13953 / NCIMB 11778 / NCTC 12712 / WDCM 00102 / Lb 14) protein is Phosphonates import ATP-binding protein PhnC.